Reading from the N-terminus, the 496-residue chain is MRKEVLPPVLSTTTVCFEKKPIIATLLALSLVMIVWNLPPYYHNLISTARPCSAVTTTTTTTLLSSSNFTSAENFTTSLSTTTAAASQKYDSTPSDPNKRVFQPFGNAAALFVLMGAYRGGPTTFSVIGLASKPIHVYGKPWYKCEWISNNGTSIRAKAQKILPDWGYGRVYTVVVVNCTFNSNPNSDNTGGKLILNAYYNESPKLFERFTTLEESAGIYDESKYSPPYQYDYLYCGSSLYGNVSASRMREWMAYHAWFFGDKSHFVFHDAGGVSPEVRKVLEPWIRAGRVTVQNIRDQSQYDGYYYNQFLIVNDCLHRYRYAANWTFFFDVDEYIYLPHGNTLESVLDEFSVNTQFTIEQNPMSSVLCINDSSQDYPRQWGFEKLLFKDSRTKIRRDRKYAIQAKNAFATGVHMSENIVGKTLHKTETKIRYYHYHNTITVHEELCREMLPNSAKKKVTLYNKLPYVYDDNMKKLVKTIKEFEQKKLGTDVKNFS.

A helical membrane pass occupies residues I22–Y42. Positions D232–K464 constitute a GT92 domain.

The protein belongs to the glycosyltransferase 92 family. As to expression, expressed in root vasculature, mature leaves, trichomes, flowers, siliques and seeds.

It is found in the golgi apparatus membrane. Involved in the biosynthesis of beta-1,4-galactan. Can transfer galactose residues from UDP-galactose to beta-1,4-galactopentaose in vitro. Forms specifically beta-1,4-galactosyl linkages and can add successive beta-1,4-galactosyl residues to the acceptor. Beta-1,4-galactans are abundant polysaccharides in plant cell walls and are found as side-chain of rhamnogalacturonan I, which is a major component of pectin. The chain is Galactan beta-1,4-galactosyltransferase GALS1 from Arabidopsis thaliana (Mouse-ear cress).